We begin with the raw amino-acid sequence, 1383 residues long: DNA-directed RNA polymerase subunit beta (1383 aa).

Belongs to the RNA polymerase beta chain family. In terms of assembly, the RNAP catalytic core consists of 2 alpha, 1 beta, 1 beta' and 1 omega subunit. When a sigma factor is associated with the core the holoenzyme is formed, which can initiate transcription.

The enzyme catalyses RNA(n) + a ribonucleoside 5'-triphosphate = RNA(n+1) + diphosphate. Functionally, DNA-dependent RNA polymerase catalyzes the transcription of DNA into RNA using the four ribonucleoside triphosphates as substrates. In Bartonella quintana (strain Toulouse) (Rochalimaea quintana), this protein is DNA-directed RNA polymerase subunit beta.